We begin with the raw amino-acid sequence, 379 residues long: Tryptophan--tRNA ligase, mitochondrial (379 aa).

ATP-binding positions include Gln-42 and 48–51 (HLGN). The short motif at 43–51 (PTGCFHLGN) is the 'HIGH' region element. Position 184 (Asp-184) interacts with L-tryptophan. ATP-binding positions include 196–198 (GDD), Val-235, 244–248 (KMSKS), and Lys-247. The short motif at 244–248 (KMSKS) is the 'KMSKS' region element.

It belongs to the class-I aminoacyl-tRNA synthetase family. In terms of assembly, homodimer.

The protein resides in the mitochondrion matrix. The enzyme catalyses tRNA(Trp) + L-tryptophan + ATP = L-tryptophyl-tRNA(Trp) + AMP + diphosphate + H(+). Functionally, mitochondrial aminoacyl-tRNA synthetase that catalyzes the attachment of tryptophan to tRNA(Trp). This Saccharomyces cerevisiae (strain ATCC 204508 / S288c) (Baker's yeast) protein is Tryptophan--tRNA ligase, mitochondrial (MSW1).